The sequence spans 189 residues: Shikimate kinase (189 aa).

22-27 (ASGKST) serves as a coordination point for ATP. Ser26 contributes to the Mg(2+) binding site. 3 residues coordinate substrate: Asp44, Arg68, and Gly90. Arg128 is a binding site for ATP. A substrate-binding site is contributed by Arg147.

It belongs to the shikimate kinase family. Monomer. Requires Mg(2+) as cofactor.

The protein localises to the cytoplasm. It carries out the reaction shikimate + ATP = 3-phosphoshikimate + ADP + H(+). It participates in metabolic intermediate biosynthesis; chorismate biosynthesis; chorismate from D-erythrose 4-phosphate and phosphoenolpyruvate: step 5/7. In terms of biological role, catalyzes the specific phosphorylation of the 3-hydroxyl group of shikimic acid using ATP as a cosubstrate. The polypeptide is Shikimate kinase (Synechococcus sp. (strain JA-3-3Ab) (Cyanobacteria bacterium Yellowstone A-Prime)).